A 193-amino-acid polypeptide reads, in one-letter code: dTTP/UTP pyrophosphatase (193 aa).

D77 (proton acceptor) is an active-site residue.

It belongs to the Maf family. YhdE subfamily. A divalent metal cation serves as cofactor.

The protein localises to the cytoplasm. The enzyme catalyses dTTP + H2O = dTMP + diphosphate + H(+). It carries out the reaction UTP + H2O = UMP + diphosphate + H(+). In terms of biological role, nucleoside triphosphate pyrophosphatase that hydrolyzes dTTP and UTP. May have a dual role in cell division arrest and in preventing the incorporation of modified nucleotides into cellular nucleic acids. The protein is dTTP/UTP pyrophosphatase of Bacteroides fragilis (strain YCH46).